Here is a 406-residue protein sequence, read N- to C-terminus: Argininosuccinate synthase (406 aa).

ATP is bound by residues 12 to 20 (AYSGGLDTS) and Ala39. L-citrulline-binding residues include Tyr90 and Ser95. An ATP-binding site is contributed by Gly120. Residues Thr122, Asn126, and Asp127 each coordinate L-aspartate. Asn126 contributes to the L-citrulline binding site. Residues Arg130, Ser179, Ser188, Glu264, and Tyr276 each coordinate L-citrulline.

The protein belongs to the argininosuccinate synthase family. Type 1 subfamily. In terms of assembly, homotetramer.

The protein localises to the cytoplasm. The enzyme catalyses L-citrulline + L-aspartate + ATP = 2-(N(omega)-L-arginino)succinate + AMP + diphosphate + H(+). It functions in the pathway amino-acid biosynthesis; L-arginine biosynthesis; L-arginine from L-ornithine and carbamoyl phosphate: step 2/3. This Geobacter sp. (strain M21) protein is Argininosuccinate synthase.